A 285-amino-acid chain; its full sequence is Probable endonuclease 4 (285 aa).

The Zn(2+) site is built by His-69, His-109, Glu-145, Asp-179, His-182, His-216, Asp-229, His-231, and Glu-261.

The protein belongs to the AP endonuclease 2 family. Zn(2+) serves as cofactor.

The enzyme catalyses Endonucleolytic cleavage to 5'-phosphooligonucleotide end-products.. In terms of biological role, endonuclease IV plays a role in DNA repair. It cleaves phosphodiester bonds at apurinic or apyrimidinic (AP) sites, generating a 3'-hydroxyl group and a 5'-terminal sugar phosphate. The chain is Probable endonuclease 4 from Escherichia fergusonii (strain ATCC 35469 / DSM 13698 / CCUG 18766 / IAM 14443 / JCM 21226 / LMG 7866 / NBRC 102419 / NCTC 12128 / CDC 0568-73).